A 268-amino-acid chain; its full sequence is Helix-loop-helix protein 25 (268 aa).

The segment covering 1–23 (MPKVIQSSMSDYRSVPYNQTPKS) has biased composition (polar residues). The interval 1 to 29 (MPKVIQSSMSDYRSVPYNQTPKSASERKR) is disordered. The segment at 92-105 (ERRKVKTEREKIRR) is basic motif. The region spanning 92–149 (ERRKVKTEREKIRRKKQDDCYAELKFFILNKQMGSYEQRLKLERITILEIIIDYIKHN) is the bHLH domain. The helix-loop-helix motif stretch occupies residues 106 to 149 (KKQDDCYAELKFFILNKQMGSYEQRLKLERITILEIIIDYIKHN).

The protein localises to the nucleus. Its function is as follows. Probable transcription factor. Modulates lifespan and also recovery from the developmentally arrested larval state known as dauer, perhaps acting upstream of phosphatase PTEN/daf-18. Regulates expression of genes involved in cell division, cell-cycle regulation, and sexual reproduction, including daf-18. This Caenorhabditis elegans protein is Helix-loop-helix protein 25.